The sequence spans 446 residues: MVGGGALRRVGKYEVGRTIGEGTFAKVKFAQNTESGESVAMKVVDRSSILKHKMADQIKREISIMKLVRHPNVVRLHEVLASRKKIFIILEFITGGELFDKIIRHGRLNEADARRYFQQLIDGVDFCHSKGVYHRDLKPENLLLDSQGNLKISDFGLSAWPAQGGALLRTTCGTPNYVAPEVLSHKGYDGALADTWSCGVILYVLLAGYLPFDEVDLTTLYGKIESAEYSFPAWFPNGAKSLIHRILDPNPDKRIRIEEIRNDEWFKKNYEPTREIESEEVNLDDVNAAFDDPEEDADHTLDDEAGPLTLNAFDLIILSQGLNLAALFDRRQDYDKLQNRFLSRKPAKVIMSSMEVVAQSMGYKTHIRNYKMRVEGLNANKTSHLAVMLEIFEVAPSIFMIELQRAAGDTSDYNKFINNYCSKLDDIIWNFPIEKSKSRISRLSKR.

In terms of domain architecture, Protein kinase spans 13-266 (YEVGRTIGEG…IEEIRNDEWF (254 aa)). Residues 19-27 (IGEGTFAKV) and Lys-42 each bind ATP. Asp-136 functions as the Proton acceptor in the catalytic mechanism. Positions 154–181 (DFGLSAWPAQGGALLRTTCGTPNYVAPE) are activation loop. The NAF domain occupies 301-329 (LDDEAGPLTLNAFDLIILSQGLNLAALFD). The segment at 336–365 (KLQNRFLSRKPAKVIMSSMEVVAQSMGYKT) is PPI.

Belongs to the protein kinase superfamily. CAMK Ser/Thr protein kinase family. SNF1 subfamily. Mn(2+) is required as a cofactor.

The enzyme catalyses L-seryl-[protein] + ATP = O-phospho-L-seryl-[protein] + ADP + H(+). It catalyses the reaction L-threonyl-[protein] + ATP = O-phospho-L-threonyl-[protein] + ADP + H(+). In terms of biological role, CIPK serine-threonine protein kinases interact with CBL proteins. Binding of a CBL protein to the regulatory NAF domain of CIPK protein lead to the activation of the kinase in a calcium-dependent manner. This chain is CBL-interacting protein kinase 8 (CIPK8), found in Oryza sativa subsp. japonica (Rice).